A 338-amino-acid chain; its full sequence is DNA polymerase III subunit delta (338 aa).

The protein belongs to the DNA polymerase HolA subunit family. In terms of assembly, DNA polymerase III contains a core (composed of alpha, epsilon and theta chains) that associates with a tau subunit. This core dimerizes to form the POLIII' complex. PolIII' associates with the gamma complex (composed of gamma, delta, delta', psi and chi chains) and with the beta chain to form the complete DNA polymerase III complex.

The catalysed reaction is DNA(n) + a 2'-deoxyribonucleoside 5'-triphosphate = DNA(n+1) + diphosphate. Functionally, DNA polymerase III is a complex, multichain enzyme responsible for most of the replicative synthesis in bacteria. This DNA polymerase also exhibits 3' to 5' exonuclease activity. The delta subunit seems to interact with the gamma subunit to transfer the beta subunit on the DNA. The protein is DNA polymerase III subunit delta (holA) of Buchnera aphidicola subsp. Schizaphis graminum (strain Sg).